A 480-amino-acid polypeptide reads, in one-letter code: Gamma-aminobutyric acid receptor subunit rho-1 (480 aa).

The signal sequence occupies residues 1-21 (MLAVQNMKFGIFLLWWGWVLA). The Extracellular portion of the chain corresponds to 22-281 (AESTAHWPGR…LYINFTLRRH (260 aa)). Residues 29-38 (PGREVHEPSR) are compositionally biased toward basic and acidic residues. The disordered stretch occupies residues 29 to 67 (PGREVHEPSRKGSRPQRQRRGAHDDAHKQGSPILRRSSD). Over residues 39-48 (KGSRPQRQRR) the composition is skewed to basic residues. Residue R126 coordinates 4-aminobutanoate. Residue N141 is glycosylated (N-linked (GlcNAc...) asparagine). S190 lines the 4-aminobutanoate pocket. An intrachain disulfide couples C199 to C213. E218 serves as a coordination point for 4-aminobutanoate. N-linked (GlcNAc...) asparagine glycosylation is found at N235 and N275. A helical transmembrane segment spans residues 282-302 (IFFFLLQTYFPATLMVMLSWV). Residues 303–314 (SFWIDRRAVPAR) are Cytoplasmic-facing. Residues 315-335 (VPLGITTVLTMSTIITGVNAS) form a helical membrane-spanning segment. Residues 336-346 (MPRVSYIKAVD) lie on the Extracellular side of the membrane. Residues 347 to 367 (IYLWVSFVFVFLSVLEYAAVN) traverse the membrane as a helical segment. At 368-458 (YLTTVQERKE…MRINTHAIDK (91 aa)) the chain is on the cytoplasmic side. Residues 459–479 (YSRIIFPAAYILFNLIYWSIF) traverse the membrane as a helical segment. Position 480 (S480) is a topological domain, extracellular.

This sequence belongs to the ligand-gated ion channel (TC 1.A.9) family. Gamma-aminobutyric acid receptor (TC 1.A.9.5) subfamily. GABRR1 sub-subfamily. In terms of assembly, three rho subunits (rho-1/GBRR1, rho-2/GBRR2 and rho-3/GBRR3) coassemble either to form functional homopentamers or heteropentamers. Rho-1/GBRR1 subunits can also associate with alpha-1/GBRA1 subunits to form a functional GABAAR. Interacts with SQSTM1. As to expression, expressed in the cerebellum.

It localises to the postsynaptic cell membrane. The protein localises to the cell membrane. The enzyme catalyses chloride(in) = chloride(out). Inhibited by TPMPA, a rho-specific antagonist, when forming a homopentamer. In contrast with other GABAARs, rho-1 GABAAR is not inhibited by bicuculline when forming a homopentamer. Functionally, rho subunit of the pentameric ligand-gated chloride channels responsible for mediating the effects of gamma-aminobutyric acid (GABA), the major inhibitory neurotransmitter in the brain. Rho-containing GABA-gated chloride channels are a subclass of GABA(A) receptors (GABAARs) entirely composed of rho subunits, where GABA molecules bind at the rho intersubunit interfaces. When activated by GABA, rho-GABAARs selectively allow the flow of chloride anions across the cell membrane down their electrochemical gradient. Rho-1 subunits are primarily expressed in retina where rho-1-containing GABAARs play a role in retinal neurotransmission. Rho-1 GABAARs are also involved in neuronal tonic (extrasynaptic) and phasic (synaptic) transmission in the Purkinje neurons of the cerebellum. Rho-1 GABAARs may also contribute to the regulation of glial development in the cerebellum by controlling extrasynaptic transmission. The chain is Gamma-aminobutyric acid receptor subunit rho-1 from Mus musculus (Mouse).